Consider the following 384-residue polypeptide: Class V chitinase CHIT5a (384 aa).

Positions 1–27 are cleaved as a signal peptide; that stretch reads MAVQKIIITPILVFLVTIFFNVSSSSS. Residues Asn29, Asn114, and Asn133 are each glycosylated (N-linked (GlcNAc...) asparagine). In terms of domain architecture, GH18 spans 39 to 384; sequence GVRSAYWPAG…SKQASNAWGH (346 aa). Residue Glu152 is the Proton donor of the active site. 2 N-linked (GlcNAc...) asparagine glycosylation sites follow: Asn195 and Asn234.

Belongs to the glycosyl hydrolase 18 family. Chitinase class V subfamily.

The enzyme catalyses Random endo-hydrolysis of N-acetyl-beta-D-glucosaminide (1-&gt;4)-beta-linkages in chitin and chitodextrins.. The protein operates within glycan degradation; chitin degradation. Its function is as follows. Possesses chitinase activity in vitro toward glycol chitin, carboxymethyl-chitin, colloidal chitin, and the chitin oligosaccharides (N-acetylglucosamine) (GlcNAc)6 and (GlcNAc)5. Hydrolyzes (GlcNAc)6 into (GlcNAc)4 and (GlcNAc)2, or two (GlcNAc)3 molecules. Has the capacity to inhibit hyphal growth of the fungus Trichoderma viride in an agar-plate bioassay. In Medicago truncatula (Barrel medic), this protein is Class V chitinase CHIT5a.